A 198-amino-acid chain; its full sequence is MIMRRIQVTETTENKDLVQGDVQAETATEEVERSEVQEEIELSVEEQYEANVAELQAKLDDDEENRHLRLRADFDNMRRRQQLDGEAAEKYRAQSLLSDLLPVLDNFERALQVETTSEETASIIKGIEMVYRSLLEATVFEGLQVIKAEGEQFDPNIHQAVMQEQDSEKETGVVLRELQKGYILKDRVLRPTMVSVNE.

This sequence belongs to the GrpE family. In terms of assembly, homodimer.

The protein resides in the cytoplasm. Participates actively in the response to hyperosmotic and heat shock by preventing the aggregation of stress-denatured proteins, in association with DnaK and GrpE. It is the nucleotide exchange factor for DnaK and may function as a thermosensor. Unfolded proteins bind initially to DnaJ; upon interaction with the DnaJ-bound protein, DnaK hydrolyzes its bound ATP, resulting in the formation of a stable complex. GrpE releases ADP from DnaK; ATP binding to DnaK triggers the release of the substrate protein, thus completing the reaction cycle. Several rounds of ATP-dependent interactions between DnaJ, DnaK and GrpE are required for fully efficient folding. The protein is Protein GrpE of Lysinibacillus sphaericus (Bacillus sphaericus).